The primary structure comprises 218 residues: Large ribosomal subunit protein uL4 (218 aa).

Positions alanine 46 to alanine 100 are disordered. Positions glycine 62–glycine 73 are enriched in basic residues.

This sequence belongs to the universal ribosomal protein uL4 family. In terms of assembly, part of the 50S ribosomal subunit.

One of the primary rRNA binding proteins, this protein initially binds near the 5'-end of the 23S rRNA. It is important during the early stages of 50S assembly. It makes multiple contacts with different domains of the 23S rRNA in the assembled 50S subunit and ribosome. Functionally, forms part of the polypeptide exit tunnel. The protein is Large ribosomal subunit protein uL4 of Corynebacterium efficiens (strain DSM 44549 / YS-314 / AJ 12310 / JCM 11189 / NBRC 100395).